The primary structure comprises 600 residues: Netrin-1 (600 aa).

The signal sequence occupies residues 1 to 24; the sequence is MMRAMWEALAALAAVSCLVGAVRG. In terms of domain architecture, Laminin N-terminal spans 47 to 284; sequence HPRRCIPDFV…AVSDLQVGGR (238 aa). N-linked (GlcNAc...) asparagine glycans are attached at residues asparagine 95, asparagine 116, and asparagine 131. 14 cysteine pairs are disulfide-bonded: cysteine 119–cysteine 152, cysteine 285–cysteine 294, cysteine 287–cysteine 304, cysteine 306–cysteine 315, cysteine 318–cysteine 338, cysteine 341–cysteine 350, cysteine 343–cysteine 368, cysteine 371–cysteine 380, cysteine 383–cysteine 401, cysteine 404–cysteine 416, cysteine 406–cysteine 423, cysteine 425–cysteine 434, cysteine 437–cysteine 451, and cysteine 472–cysteine 544. Laminin EGF-like domains are found at residues 285 to 340, 341 to 403, and 404 to 453; these read CKCN…ECVA, CNCN…ACKA, and CDCH…PCIK. A glycan (N-linked (GlcNAc...) asparagine) is linked at asparagine 417. Residues 472-600 form the NTR domain; it reads CDSYCKASKG…KFQQREKKEL (129 aa). Residues 530 to 532 carry the Cell attachment site motif; sequence RGD.

In terms of assembly, binds to its receptors; DCC, UNC5A, UNC5B, UNC5C and probably UNC5D. Binds to its receptor; DSCAM. Interacts with APP.

Its subcellular location is the secreted. The protein localises to the cytoplasm. In terms of biological role, netrins control guidance of CNS commissural axons and peripheral motor axons. Its association with either DCC or some UNC5 receptors will lead to axon attraction or repulsion, respectively. Binding to UNC5C might cause dissociation of UNC5C from polymerized TUBB3 in microtubules and thereby lead to increased microtubule dynamics and axon repulsion. Involved in dorsal root ganglion axon projection towards the spinal cord. It also serves as a survival factor via its association with its receptors which prevent the initiation of apoptosis. Involved in colorectal tumorigenesis by regulating apoptosis. The chain is Netrin-1 (NTN1) from Sus scrofa (Pig).